A 260-amino-acid chain; its full sequence is 3beta-hydroxysteroid dehydrogenase 2 (260 aa).

NAD(+) is bound by residues D43, 69–70 (DV), N96, Y163, and K167. Y163 serves as the catalytic Proton acceptor.

The protein belongs to the short-chain dehydrogenases/reductases (SDR) family.

It catalyses the reaction 3-oxo-5beta-cholan-24-oate + NADH + H(+) = isolithocholate + NAD(+). The enzyme catalyses 12alpha-hydroxy-3-oxo-5beta-cholan-24-oate + NADH + H(+) = isodeoxycholate + NAD(+). The catalysed reaction is 12alpha-hydroxy-3-oxo-5beta-cholan-24-oate + NADPH + H(+) = isodeoxycholate + NADP(+). It carries out the reaction 7alpha,12alpha-dihydroxy-3-oxo-5beta-cholan-24-oate + NADH + H(+) = isocholate + NAD(+). It catalyses the reaction 3-oxochenodeoxycholate + NADH + H(+) = isochenodeoxycholate + NAD(+). Involved in the modification of secondary bile acids into iso-bile acids (3beta-bile acids) via epimerization of the 3-OH group through a 3-oxo-intermediate. Catalyzes the reduction of 12-alpha-hydroxy-3-oxo-5-beta-cholan-24-oate (3-oxo-DCA) and 3-oxo-5-beta-cholan-24-oate (3-oxo-LCA) to yield isodeoxycholate (isoDCA) and isolithocholate (isoLCA), respectively. Is also able to catalyze the reduction of 3-dehydrocholate (3-oxo-CA or 7alpha,12alpha-dihydroxy-3-oxo-5beta-cholan-24-oate) and 7-alpha-hydroxy-3-oxo-5-beta-cholan-24-oate (3-oxo-CDCA), into isocholate (isoCA) and isochenodeoxycholate (isoCDCA), respectively. Accepts both NADH and NADPH as cosubstrates. The conversion of the abundant bile acid deoxycholate (DCA) into isoDCA by the gut bacterium E.lenta favors the growth of the keystone commensal genus Bacteroides, since isoDCA is less cytotoxic than its parent compound, DCA; iso-bile acids have thus a potential role in modulating gut community composition. The protein is 3beta-hydroxysteroid dehydrogenase 2 of Eggerthella lenta (strain ATCC 25559 / DSM 2243 / CCUG 17323 / JCM 9979 / KCTC 3265 / NCTC 11813 / VPI 0255 / 1899 B) (Eubacterium lentum).